The following is an 86-amino-acid chain: Weak neurotoxin 8 (86 aa).

Positions 1–21 are cleaved as a signal peptide; sequence MKTLLLTLVVVTIVCLDLGYT. Intrachain disulfides connect cysteine 24-cysteine 45, cysteine 27-cysteine 32, cysteine 38-cysteine 63, cysteine 67-cysteine 78, and cysteine 79-cysteine 84.

This sequence belongs to the three-finger toxin family. Ancestral subfamily. Orphan group II sub-subfamily. In terms of tissue distribution, expressed by the venom gland.

It is found in the secreted. Its function is as follows. Binds with low affinity to muscular (alpha-1-beta-1-delta-epsilon/CHRNA1-CHRNB1-CHRND-CHRNE) and very low affinity to neuronal (alpha-7/CHRNA7) nicotinic acetylcholine receptor (nAChR). The sequence is that of Weak neurotoxin 8 from Naja sputatrix (Malayan spitting cobra).